We begin with the raw amino-acid sequence, 977 residues long: Short transient receptor potential channel 4 (977 aa).

The Cytoplasmic segment spans residues 1-324; that stretch reads MAQFYYKRNV…YDEFPGWRRR (324 aa). ANK repeat units follow at residues 29 to 60, 71 to 93, 96 to 118, and 141 to 165; these read LSPSEKAYLNAVEKGDYASVKKSLEEAEIYFK, RTALLIAIENENLELIELLLSFN, VGDALLHAIRKEVVGAVELLLNH, and PDITPIILAAHTNNYEIIKLLVQKG. Zn(2+)-binding residues include His-172, Cys-176, Cys-178, and Cys-181. Positions 223–260 form a coiled coil; it reads LSWELQELSKVENEFKSEYEELSRQCKQFAKDLLDQTR. Positions 325-359 form an intramembrane region, discontinuously helical; that stretch reads HWAVKMVTCFIIGLLFPVFSVCYLIAPKSPLGLFI. The Cytoplasmic portion of the chain corresponds to 360–362; sequence RKP. A helical membrane pass occupies residues 363–383; it reads FIKFICHTASYLTFLFLLLLA. Topologically, residues 384–403 are extracellular; sequence SQHIDRSDLNRQGPPPTIVE. The chain crosses the membrane as a helical span at residues 404–418; sequence WMILPWVLGFIWGEI. Glu-417, Gln-420, Asn-435, and Asp-438 together coordinate Ca(2+). The Cytoplasmic segment spans residues 419–432; sequence KQMWDGGLQDYIHD. A helical transmembrane segment spans residues 433 to 453; that stretch reads WWNLMDFVMNSLYLATISLKI. The Extracellular segment spans residues 454-475; it reads VAFVKYSALNPRESWDMWHPTL. The helical transmembrane segment at 476–498 threads the bilayer; the sequence is VAEALFAIANIFSSLRLISLFTA. The Cytoplasmic segment spans residues 499-511; that stretch reads NSHLGPLQISLGR. Residues 512–534 traverse the membrane as a helical segment; the sequence is MLLDILKFLFIYCLVLLAFANGL. The Extracellular portion of the chain corresponds to 535–599; sequence NQLYFYYEET…HEFTEFVGAT (65 aa). Cys-549 and Cys-554 are oxidised to a cystine. Residues 600–620 form a helical membrane-spanning segment; the sequence is MFGTYNVISLVVLLNMLIAMM. Residues 615-977 form an interaction with ITPR1, ITPR2 and ITPR3 region; it reads MLIAMMNNSY…THEDYVTTRL (363 aa). At 621-977 the chain is on the cytoplasmic side; sequence NNSYQLIADH…THEDYVTTRL (357 aa). The disordered stretch occupies residues 762–790; it reads IQSANASKESSNSADSDEKSDSEGNSKDK. Low complexity predominate over residues 764–775; it reads SANASKESSNSA. Residues 777–788 are compositionally biased toward basic and acidic residues; that stretch reads SDEKSDSEGNSK. Phosphotyrosine; by FYN occurs at positions 959 and 972. Residues 975–977 form a PDZ-binding domain region; it reads TRL.

This sequence belongs to the transient receptor (TC 1.A.4) family. STrpC subfamily. TRPC4 sub-subfamily. As to quaternary structure, homotetramer. Heterotetramer with TRPC1 and/or TRPC5. Forms a heteromeric ion channel with TRPC1, with a 1:3 TRPC1:TRPC4 stoichiometry. Interacts with TRPC4AP. Isoform alpha but not isoform beta interacts with ITPR1, ITPR2 and ITPR3. Interacts with (via PDZ-binding domain) with NHERF1. Interacts with MX1 and RNF24. Interacts (via CIRB domain) with SESTD1 (via spectrin 1 repeat). Interacts with CDH5 and CTNNB1. Interacts with SPTAN1 (via C-terminal spectrin repeats) and SPTBN5 (via C-terminus). Interacts (via protein 4.1-binding domain) with EPB41L2. Interacts with PLSCR1. Phosphorylation modulates TRPC channel function by regulating the level of TRPC4 at the cell surface and by increasing the association with NHERF1. In terms of tissue distribution, strongly expressed in placenta. Expressed at lower levels in heart, pancreas, kidney and brain. Expressed in endothelial cells. Isoform alpha was found to be the predominant isoform. Isoform beta was not found in pancreas and brain.

The protein localises to the cell membrane. The enzyme catalyses Ca(2+)(in) = Ca(2+)(out). It catalyses the reaction Na(+)(in) = Na(+)(out). It carries out the reaction Li(+)(in) = Li(+)(out). The catalysed reaction is Cs(+)(in) = Cs(+)(out). May be operated by a phosphatidylinositol second messenger system activated by receptor tyrosine kinases or G-protein coupled receptors. May be activated by intracellular calcium store depletion. Inhibited by xanthine-based inhibitor Pico145. Its function is as follows. Forms a receptor-activated non-selective calcium permeant cation channel. Acts as a cell-cell contact-dependent endothelial calcium entry channel. Forms a homomeric ion channel or a heteromeric ion channel with TRPC1; the heteromeric ion channel has reduced calcium permeability compared to the homomeric channel. Also permeable to monovalent ions including sodium, lithium and cesium ions. Functionally, forms a receptor-activated non-selective calcium permeant cation channel. This chain is Short transient receptor potential channel 4 (TRPC4), found in Homo sapiens (Human).